The following is a 56-amino-acid chain: Ovomucoid (56 aa).

Residues 6-56 enclose the Kazal-like domain; the sequence is VDCSEYPKPACTLEYRPLCGSDNKTYGNKCNFCNAVVESNGTLTLSHFGKC. 3 disulfides stabilise this stretch: Cys-8/Cys-38, Cys-16/Cys-35, and Cys-24/Cys-56. Asn-45 is a glycosylation site (N-linked (GlcNAc...) asparagine).

It localises to the secreted. The polypeptide is Ovomucoid (Meleagris ocellata (Ocellated turkey)).